Here is a 582-residue protein sequence, read N- to C-terminus: MEPSKLFTISDNATFAPGPVINVADKKTFRTCFRILVLSVQAVTLILVIVNLGELVRMINDQGLSNQLSSITDKIRESANMIASAVGVMNQVIHGVTVSLPLQIEGNQNQLLSTLATICTSKKQVSNCSTNIPLVNDLRFINGINKFIIEDYATHDFSIGHPLNMPSFIPTATSPNGCTRIPSFSLGKTHWCYTHNVINANCKDHTSSNQYVSMGILVQTASGYPMFKTLKIQYLSDGLNRKSCSIATVPDGCAMYCYISTQLETDDYAGSSPPTQKLTLLFYNDTVTERTISPSGLEGNWATLVPGVGSGIYFENKLIFPAYGGVLPNSTLGVKSAREFFRPVNPYNPCSGPQQDLDQRALRSYFPSYFSNRRVQSAFLVCAWNQILVTNCELVVPSNNQTLMGAEGRVLLINNRLLYYQRSTSWWPYELLYEISFTFTNSGQSSVNMSWIPIYSFTRPGSGNCSGENVCPTACVSGVYLDPWPLTPYSHQSGINRNFYFTGALLNSSTTRVNPTLYVSALNNLKVLAPYGTQGLFASYTTTTCFQDTGDASVYCVYIMELASNIVGEFQILPVLTRLTIT.

A helical membrane pass occupies residues 35 to 55; the sequence is ILVLSVQAVTLILVIVNLGEL. Cystine bridges form between C178/C202, C192/C253, and C244/C257. N284 and N329 each carry an N-linked (GlcNAc...) asparagine; by host glycan. Intrachain disulfides connect C350–C471, C382–C392, and C465–C475. 2 N-linked (GlcNAc...) asparagine; by host glycosylation sites follow: N400 and N448. N507 carries N-linked (GlcNAc...) asparagine; by host glycosylation. A disulfide bridge connects residues C545 and C556.

This sequence belongs to the paramyxoviruses hemagglutinin-neuraminidase family. Homotetramer; composed of disulfide-linked homodimers. Interacts with F protein trimer.

The protein resides in the virion membrane. The protein localises to the host cell membrane. It catalyses the reaction Hydrolysis of alpha-(2-&gt;3)-, alpha-(2-&gt;6)-, alpha-(2-&gt;8)- glycosidic linkages of terminal sialic acid residues in oligosaccharides, glycoproteins, glycolipids, colominic acid and synthetic substrates.. Its function is as follows. Attaches the virus to alpha-2,3-linked sialic acid-containing cell receptors and thereby initiating infection. Binding of HN protein to the receptor induces a conformational change that allows the F protein to trigger virion/cell membranes fusion. Binds to the glycan motifs sialyl Lewis (SLe) and GM2 ganglioside (GM2-glycan). Functionally, neuraminidase activity ensures the efficient spread of the virus by dissociating the mature virions from the neuraminic acid containing glycoproteins. The chain is Hemagglutinin-neuraminidase (HN) from Homo sapiens (Human).